The chain runs to 680 residues: Lipase 1 (680 aa).

The signal sequence occupies residues 1-34 (MKSQNKYSIRKFSVGASSILIATLLFLSGGQAQA). Positions 35–290 (AEKQVNMGNS…AKAKDDQTNK (256 aa)) are excised as a propeptide. Residues 82–259 (KNLHNDKTIS…PTKDNDKKNG (178 aa)) are disordered. Positions 84 to 111 (LHNDKTISEENHRKTDDLNKDQLKDDKN) are enriched in basic and acidic residues. Polar residues-rich tracts occupy residues 125–138 (KNNN…NQGL), 162–193 (SQDS…SQRE), and 204–223 (QPQQ…FNNE). The span at 224–234 (QEVKPQKDEKT) shows a compositional bias: basic and acidic residues. Positions 235 to 246 (LSVSDLKNNQKS) are enriched in polar residues. Serine 408 serves as the catalytic Nucleophile. Residue aspartate 600 is the Charge relay system of the active site. Position 638 (aspartate 638) interacts with Ca(2+). Histidine 639 acts as the Charge relay system in catalysis. Residues aspartate 641, aspartate 646, and aspartate 649 each contribute to the Ca(2+) site.

It belongs to the AB hydrolase superfamily. Lipase family.

The protein resides in the secreted. The enzyme catalyses a triacylglycerol + H2O = a diacylglycerol + a fatty acid + H(+). The polypeptide is Lipase 1 (lip1) (Staphylococcus aureus (strain Mu50 / ATCC 700699)).